We begin with the raw amino-acid sequence, 387 residues long: Acetylserotonin O-methyltransferase (387 aa).

S-adenosyl-L-methionine is bound by residues Tyr153, Trp170, Glu216, 246 to 248 (GDF), and Arg263. His266 functions as the Proton donor/acceptor in the catalytic mechanism. 2 residues coordinate substrate: Asp267 and Gln317. The tract at residues 354 to 387 (AARGGGAGARSDGGGGDATSQTGSGTGSEVGAQD) is disordered. Positions 356–370 (RGGGAGARSDGGGGD) are enriched in gly residues.

The protein belongs to the class I-like SAM-binding methyltransferase superfamily. Cation-independent O-methyltransferase family. As to quaternary structure, homodimer. As to expression, expressed predominantly in the pineal gland (at protein level). Very low expression, if any, in the retina.

It carries out the reaction N-acetylserotonin + S-adenosyl-L-methionine = melatonin + S-adenosyl-L-homocysteine + H(+). Its pathway is aromatic compound metabolism; melatonin biosynthesis; melatonin from serotonin: step 1/2. Functionally, catalyzes the transfer of a methyl group onto N-acetylserotonin, producing melatonin (N-acetyl-5-methoxytryptamine). This chain is Acetylserotonin O-methyltransferase (Asmt), found in Mus musculus (Mouse).